A 255-amino-acid polypeptide reads, in one-letter code: tRNA (guanine-N(1)-)-methyltransferase (255 aa).

S-adenosyl-L-methionine-binding positions include Gly-113 and 133–138 (IGDYVL).

It belongs to the RNA methyltransferase TrmD family. Homodimer.

The protein resides in the cytoplasm. The catalysed reaction is guanosine(37) in tRNA + S-adenosyl-L-methionine = N(1)-methylguanosine(37) in tRNA + S-adenosyl-L-homocysteine + H(+). Specifically methylates guanosine-37 in various tRNAs. This is tRNA (guanine-N(1)-)-methyltransferase from Escherichia coli O6:K15:H31 (strain 536 / UPEC).